Consider the following 412-residue polypeptide: 4-hydroxyphenylpyruvate dioxygenase (412 aa).

VOC domains lie at Gly31 to Arg179 and Arg209 to Lys369. The Fe cation site is built by His212, His295, and Glu380.

Belongs to the 4HPPD family. Requires Fe cation as cofactor.

It catalyses the reaction 3-(4-hydroxyphenyl)pyruvate + O2 = homogentisate + CO2. Its pathway is amino-acid degradation; L-phenylalanine degradation; acetoacetate and fumarate from L-phenylalanine: step 3/6. In Neurospora crassa (strain ATCC 24698 / 74-OR23-1A / CBS 708.71 / DSM 1257 / FGSC 987), this protein is 4-hydroxyphenylpyruvate dioxygenase.